The primary structure comprises 260 residues: Pyridoxine 5'-phosphate synthase (260 aa).

Asparagine 10 and arginine 21 together coordinate 3-amino-2-oxopropyl phosphate. The active-site Proton acceptor is histidine 46. Positions 48 and 53 each coordinate 1-deoxy-D-xylulose 5-phosphate. Glutamate 76 acts as the Proton acceptor in catalysis. Residue threonine 113 coordinates 1-deoxy-D-xylulose 5-phosphate. Histidine 204 serves as the catalytic Proton donor. 3-amino-2-oxopropyl phosphate contacts are provided by residues aspartate 205 and 227-228; that span reads GH.

The protein belongs to the PNP synthase family. As to quaternary structure, homooctamer; tetramer of dimers.

The protein localises to the cytoplasm. It carries out the reaction 3-amino-2-oxopropyl phosphate + 1-deoxy-D-xylulose 5-phosphate = pyridoxine 5'-phosphate + phosphate + 2 H2O + H(+). The protein operates within cofactor biosynthesis; pyridoxine 5'-phosphate biosynthesis; pyridoxine 5'-phosphate from D-erythrose 4-phosphate: step 5/5. Its function is as follows. Catalyzes the complicated ring closure reaction between the two acyclic compounds 1-deoxy-D-xylulose-5-phosphate (DXP) and 3-amino-2-oxopropyl phosphate (1-amino-acetone-3-phosphate or AAP) to form pyridoxine 5'-phosphate (PNP) and inorganic phosphate. This is Pyridoxine 5'-phosphate synthase from Xylella fastidiosa (strain M23).